The chain runs to 449 residues: MVDASQYLSVTALTQYLKRKFDADPYLAKVYLTGEISNYRKRVGNQYFSLKDDHAKIGALMFRNAFSKVQFDLEEGMKVLVVGRVSLYEPSGEYRLIVEHLEPDGVGALYQAFEQLKKKLAAEGLFDRNQRPLPLFPKRVAVVTSPSGAVIQDIMTTVARRYPILQLTLFPAVVQGDQAADSLVKRLNQIKTIGGFDAVIIGRGGGSIEDLWPFNEEKVARALVDMPMPVVSSVGHETDTTITDFIADRRAATPTAAAEIVTPVTLIDALNRISEDRVRLVNAMHNRLKNAAIRVQRSAQSVVLTQPDRLYDQYVQRVDQFQQRLQQSMHNRLREADHRLAMAASQLDGRQLFIRLVNLQRQVTGDRHRLDQAMRGLVKTKRQAFASAVSGLDHLSPLKILGRGFAYVTDEQGQMLKSLSDYELDQDIHIHVADGQVGAHVTTKEKTHG.

It belongs to the XseA family. As to quaternary structure, heterooligomer composed of large and small subunits.

The protein resides in the cytoplasm. It carries out the reaction Exonucleolytic cleavage in either 5'- to 3'- or 3'- to 5'-direction to yield nucleoside 5'-phosphates.. Functionally, bidirectionally degrades single-stranded DNA into large acid-insoluble oligonucleotides, which are then degraded further into small acid-soluble oligonucleotides. This is Exodeoxyribonuclease 7 large subunit from Lacticaseibacillus casei (strain BL23) (Lactobacillus casei).